The sequence spans 309 residues: Ribonuclease Z (309 aa).

Zn(2+) is bound by residues histidine 63, histidine 65, aspartate 67, histidine 68, histidine 145, aspartate 216, and histidine 274. Aspartate 67 acts as the Proton acceptor in catalysis.

The protein belongs to the RNase Z family. As to quaternary structure, homodimer. It depends on Zn(2+) as a cofactor.

The catalysed reaction is Endonucleolytic cleavage of RNA, removing extra 3' nucleotides from tRNA precursor, generating 3' termini of tRNAs. A 3'-hydroxy group is left at the tRNA terminus and a 5'-phosphoryl group is left at the trailer molecule.. Zinc phosphodiesterase, which displays some tRNA 3'-processing endonuclease activity. Probably involved in tRNA maturation, by removing a 3'-trailer from precursor tRNA. The protein is Ribonuclease Z of Streptococcus equi subsp. equi (strain 4047).